The chain runs to 668 residues: Protein-glutamine gamma-glutamyltransferase (668 aa).

Over methionine 1–arginine 6 the chain is Cytoplasmic. The chain crosses the membrane as a helical span at residues valine 7 to methionine 27. Topologically, residues proline 28 to alanine 50 are periplasmic. A helical transmembrane segment spans residues glycine 51–leucine 71. The Cytoplasmic segment spans residues serine 72–glycine 74. Residues serine 75 to valine 95 form a helical membrane-spanning segment. At glutamate 96 to alanine 103 the chain is on the periplasmic side. A run of 2 helical transmembrane segments spans residues leucine 104–phenylalanine 124 and leucine 125–glutamine 145. Residues glutamine 146–arginine 158 are Cytoplasmic-facing. A helical transmembrane segment spans residues leucine 159–proline 179. Topologically, residues arginine 180 to glycine 548 are periplasmic. Cysteine 404 functions as the Nucleophile in the catalytic mechanism. Active-site residues include histidine 448 and aspartate 464. Residues leucine 549–proline 569 traverse the membrane as a helical segment. Residues tryptophan 570–alanine 668 are Cytoplasmic-facing.

This sequence belongs to the transglutaminase-like superfamily.

It localises to the cell inner membrane. The catalysed reaction is L-glutaminyl-[protein] + L-lysyl-[protein] = [protein]-L-lysyl-N(6)-5-L-glutamyl-[protein] + NH4(+). Its function is as follows. Displays transglutaminase activity (TGase) in vitro. Plays a critical role in the viability of P.aeruginosa. Might contribute to an essential function linked to the cell wall. This Pseudomonas aeruginosa (strain ATCC 15692 / DSM 22644 / CIP 104116 / JCM 14847 / LMG 12228 / 1C / PRS 101 / PAO1) protein is Protein-glutamine gamma-glutamyltransferase (tgpA).